A 201-amino-acid chain; its full sequence is Small ribosomal subunit protein uS4c (201 aa).

The interval Ala17 to Tyr44 is disordered. The region spanning Met89 to Gln149 is the S4 RNA-binding domain.

The protein belongs to the universal ribosomal protein uS4 family. As to quaternary structure, part of the 30S ribosomal subunit. Contacts protein S5. The interaction surface between S4 and S5 is involved in control of translational fidelity.

The protein resides in the plastid. Its subcellular location is the chloroplast. Its function is as follows. One of the primary rRNA binding proteins, it binds directly to 16S rRNA where it nucleates assembly of the body of the 30S subunit. Functionally, with S5 and S12 plays an important role in translational accuracy. This Atropa belladonna (Belladonna) protein is Small ribosomal subunit protein uS4c (rps4).